We begin with the raw amino-acid sequence, 804 residues long: uncharacterized protein (804 aa).

Helical transmembrane passes span 15–35, 243–263, 301–321, 333–353, 381–401, 403–423, 453–473, 680–700, 734–754, and 769–789; these read LLIVWLALSLAVACVLALGNI, FLLLSALLTLLLAVAAVAVAM, LSAVTGGAIGLLFENVLMVLL, SLWPWLWALGTMTVISLLVGL, FYLPIVSVVVVLLLAGLMGGS, LLWAVLAGAVVLALLCGVLGW, TLSQLSAFSLSFMLLALLLVL, ALEVMVVLVTACGMLLLLAQV, MLGFVSGLVAAIGAETALAVL, and LWIVLPCSGALLLSLFGGWLG.

The protein belongs to the ABC-4 integral membrane protein family.

Its subcellular location is the cell membrane. This is an uncharacterized protein from Escherichia coli (strain K12).